Reading from the N-terminus, the 252-residue chain is Chitooligosaccharide deacetylase (252 aa).

Positions 61 and 125 each coordinate Mg(2+).

The protein belongs to the YdjC deacetylase family. ChbG subfamily. Homodimer. Mg(2+) serves as cofactor.

Its subcellular location is the cytoplasm. The enzyme catalyses N,N'-diacetylchitobiose + H2O = N-acetyl-beta-D-glucosaminyl-(1-&gt;4)-D-glucosamine + acetate. The catalysed reaction is diacetylchitobiose-6'-phosphate + H2O = N'-monoacetylchitobiose-6'-phosphate + acetate. It participates in glycan degradation; chitin degradation. Its function is as follows. Involved in the degradation of chitin. ChbG is essential for growth on the acetylated chitooligosaccharides chitobiose and chitotriose but is dispensable for growth on cellobiose and chitosan dimer, the deacetylated form of chitobiose. Deacetylation of chitobiose-6-P and chitotriose-6-P is necessary for both the activation of the chb promoter by the regulatory protein ChbR and the hydrolysis of phosphorylated beta-glucosides by the phospho-beta-glucosidase ChbF. Catalyzes the removal of only one acetyl group from chitobiose-6-P to yield monoacetylchitobiose-6-P, the inducer of ChbR and the substrate of ChbF. The chain is Chitooligosaccharide deacetylase from Klebsiella pneumoniae (strain 342).